A 725-amino-acid polypeptide reads, in one-letter code: Eukaryotic elongation factor 2 kinase (725 aa).

The span at 1 to 12 shows a compositional bias: basic and acidic residues; that stretch reads MADEDLIFRLEG. Residues 1–38 are disordered; it reads MADEDLIFRLEGVDGGQSPRAGHDGDSDGDSDDEEGYF. The residue at position 2 (Ala-2) is an N-acetylalanine. 2 positions are modified to phosphoserine: Ser-18 and Ser-27. Over residues 27-36 the composition is skewed to acidic residues; sequence SDGDSDDEEG. Ser-61 and Ser-66 each carry phosphoserine; by autocatalysis. Phosphoserine is present on residues Ser-70, Ser-71, Ser-72, and Ser-74. Residue Ser-78 is modified to Phosphoserine; by autocatalysis and TRPM7. Residues 81–94 form a calmodulin-binding region; the sequence is FKEAWKHAIQKAKH. Residues 116-326 form the Alpha-type protein kinase domain; the sequence is RYNAVTGEWL…ICESMGLAPF (211 aa). Position 243 is a phosphoserine (Ser-243). Residue 296-302 coordinates ATP; it reads GDGNLGV. Phosphothreonine; by autocatalysis is present on residues Thr-348 and Thr-353. Disordered regions lie at residues 352 to 405 and 423 to 477; these read GTEE…PHSQ and SRDH…SLGS. Position 359 is a phosphoserine; by MAPK13 and CDK1 (Ser-359). Low complexity predominate over residues 363-377; that stretch reads RTLSGSRPPLLRPLS. Residue Ser-366 is modified to Phosphoserine; by autocatalysis, RPS6KA1 and RPS6KB1. Residues 386 to 404 are compositionally biased toward polar residues; sequence SDVTFDSLPSSPSSATPHS. Ser-392 carries the phosphoserine modification. Phosphoserine; by AMPK is present on Ser-398. Composition is skewed to basic and acidic residues over residues 423 to 436 and 445 to 469; these read SRDHDHLDNHRESE and SEKRGELDDPEPREHGHSYSNRKYE. Ser-435 is subject to Phosphoserine. Ser-445 bears the Phosphoserine; by autocatalysis mark. Ser-470 bears the Phosphoserine mark. Position 474 is a phosphoserine; by autocatalysis (Ser-474). Ser-477 bears the Phosphoserine mark. Ser-491 carries the phosphoserine; by autocatalysis modification. Position 500 is a phosphoserine; by PKA (Ser-500).

This sequence belongs to the protein kinase superfamily. Alpha-type protein kinase family. Monomer or homodimer. Interacts with Calmodulin/CALM1; this interaction is strictly required for phosphorylation activity. Autophosphorylated at multiple residues, Thr-348 being the major site. Phosphorylated by AMP-activated protein kinase AMPK at Ser-398 leading to EEF2K activation and protein synthesis inhibition. Phosphorylated by TRPM7 at Ser-78 resulting in improved protein stability, higher EE2F phosphorylated and subsequently reduced rate of protein synthesis. Phosphorylation by other kinases such as CDK1 and MAPK13 at Ser-359 or RPS6KA1 and RPS6KB1 at Ser-366 instead decrease EEF2K activity and promote protein synthesis.

It catalyses the reaction [translation elongation factor 2] + ATP = [translation elongation factor 2]-phosphate + ADP + H(+). Undergoes calcium/calmodulin-dependent intramolecular autophosphorylation, and this results in it becoming partially calcium/calmodulin-independent. Its function is as follows. Threonine kinase that regulates protein synthesis by controlling the rate of peptide chain elongation. Upon activation by a variety of upstream kinases including AMPK or TRPM7, phosphorylates the elongation factor EEF2 at a single site, renders it unable to bind ribosomes and thus inactive. In turn, the rate of protein synthesis is reduced. This Homo sapiens (Human) protein is Eukaryotic elongation factor 2 kinase (EEF2K).